The chain runs to 319 residues: MFTTVQPTNRSSLPDDLFTAIKELKRELNAVILAHYYQNSDIQDIADYIGDSLGLSQQAARTPADVIVFAGVHFMAETAKILNPDKLVLLPDLDAGCSLADSCHPEDFARFKAQYPDHIVISYINCSAEIKAMSDIICTSSNAVKIVNQIPAHQPIIFAPDRNLGRYVSQQTGRDLVLWQGSCIVHETFSERKIIELKVAHPEAKIIAHPECEASVLRHADYIGSTTALLNYSLKSSEKTFIVATEPGIIHQMQKSAPEKLFIPAPALNNCACNECPYMRLNTLEKLYLCMRDKTPEITISEDLRVKALLPIQRMLEMS.

Iminosuccinate contacts are provided by histidine 35 and serine 52. Cysteine 97 provides a ligand contact to [4Fe-4S] cluster. Residues 123–125 (YIN) and serine 140 each bind iminosuccinate. Residue cysteine 183 coordinates [4Fe-4S] cluster. Residues 209 to 211 (HPE) and threonine 226 each bind iminosuccinate. Cysteine 276 is a [4Fe-4S] cluster binding site.

Belongs to the quinolinate synthase family. Type 2 subfamily. [4Fe-4S] cluster is required as a cofactor.

The protein resides in the cytoplasm. It catalyses the reaction iminosuccinate + dihydroxyacetone phosphate = quinolinate + phosphate + 2 H2O + H(+). Its pathway is cofactor biosynthesis; NAD(+) biosynthesis; quinolinate from iminoaspartate: step 1/1. Catalyzes the condensation of iminoaspartate with dihydroxyacetone phosphate to form quinolinate. The protein is Quinolinate synthase of Microcystis aeruginosa (strain NIES-843 / IAM M-2473).